A 790-amino-acid chain; its full sequence is Disintegrin and metalloproteinase domain-containing protein 30 (790 aa).

The first 27 residues, 1–27, serve as a signal peptide directing secretion; the sequence is MRSVQIFLSQCRLLLLLVPTMLLKSLG. Positions 28 to 198 are excised as a propeptide; that stretch reads EDVIFHPEGE…KARLRDFPGS (171 aa). The Cysteine switch motif lies at 170 to 177; sequence QVCGLSDD. Cys172 contacts Zn(2+). Over 199–687 the chain is Extracellular; that stretch reads YKHPKYLELI…LRGAIPSSIW (489 aa). The Peptidase M12B domain maps to 203-393; it reads KYLELILLFD…SGATCLNNIP (191 aa). An N-linked (GlcNAc...) asparagine glycan is attached at Asn222. 3 cysteine pairs are disulfide-bonded: Cys313-Cys388, Cys353-Cys373, and Cys355-Cys361. Residue His338 coordinates Zn(2+). Glu339 is a catalytic residue. Positions 342 and 348 each coordinate Zn(2+). Asn372, Asn438, Asn473, and Asn625 each carry an N-linked (GlcNAc...) asparagine glycan. One can recognise a Disintegrin domain in the interval 399-485; sequence LKRCGNKIVE…SCPNDVYKQD (87 aa). A disulfide bridge links Cys457 with Cys477. Residues 629 to 663 form the EGF-like domain; the sequence is LQFDCLPEKCNTRGVCNNRKNCHCMYGWAPPFCEE. 3 disulfides stabilise this stretch: Cys633–Cys644, Cys638–Cys650, and Cys652–Cys661. A helical membrane pass occupies residues 688 to 708; sequence VVSIIMFRLILLILSVVFVFF. Residues 709–790 lie on the Cytoplasmic side of the membrane; it reads RQVIGNHLKP…KAKSVKKQKK (82 aa). Basic and acidic residues predominate over residues 720 to 779; sequence QEKMPLSKAKTEQEESKTKTVQEESKTKTGQEESEAKTGQEESKAKTGQEESKANIESKR. The tract at residues 720–790 is disordered; it reads QEKMPLSKAK…KAKSVKKQKK (71 aa). Tandem repeats lie at residues 732–740, 741–749, 750–758, 759–767, and 768–776. Positions 732 to 776 are 5 X 9 AA approximate repeats; the sequence is QEESKTKTVQEESKTKTGQEESEAKTGQEESKAKTGQEESKANIE. Residues 780–790 are compositionally biased toward basic residues; that stretch reads PKAKSVKKQKK.

Interacts with CTSD; this leads to activation of CTSD. The cofactor is Zn(2+). Expressed in brain neurons (at protein level). Expressed in testis.

It localises to the late endosome membrane. Its function is as follows. Plays a role in lysosomal amyloid precursor protein (APP) processing by cleaving and activating CTSD/cathepsin D which leads to APP degradation. This chain is Disintegrin and metalloproteinase domain-containing protein 30 (ADAM30), found in Homo sapiens (Human).